We begin with the raw amino-acid sequence, 388 residues long: Chorismate synthase (388 aa).

Residues arginine 39 and arginine 45 each contribute to the NADP(+) site. Residues 132-134 (RSS), 251-252 (NA), glycine 296, 311-315 (KPIPT), and arginine 337 contribute to the FMN site.

This sequence belongs to the chorismate synthase family. As to quaternary structure, homotetramer. FMNH2 is required as a cofactor.

The enzyme catalyses 5-O-(1-carboxyvinyl)-3-phosphoshikimate = chorismate + phosphate. The protein operates within metabolic intermediate biosynthesis; chorismate biosynthesis; chorismate from D-erythrose 4-phosphate and phosphoenolpyruvate: step 7/7. Its function is as follows. Catalyzes the anti-1,4-elimination of the C-3 phosphate and the C-6 proR hydrogen from 5-enolpyruvylshikimate-3-phosphate (EPSP) to yield chorismate, which is the branch point compound that serves as the starting substrate for the three terminal pathways of aromatic amino acid biosynthesis. This reaction introduces a second double bond into the aromatic ring system. The chain is Chorismate synthase from Staphylococcus aureus (strain MRSA252).